The chain runs to 119 residues: uncharacterized protein (119 aa).

The protein localises to the mitochondrion. Its subcellular location is the nucleus. This is an uncharacterized protein from Schizosaccharomyces pombe (strain 972 / ATCC 24843) (Fission yeast).